A 430-amino-acid polypeptide reads, in one-letter code: Histidinol dehydrogenase (430 aa).

Substrate is bound by residues Ser237, Gln259, and His262. Zn(2+)-binding residues include Gln259 and His262. Active-site proton acceptor residues include Glu327 and His328. 4 residues coordinate substrate: His328, Asp361, Glu415, and His420. Asp361 contacts Zn(2+). A Zn(2+)-binding site is contributed by His420.

Belongs to the histidinol dehydrogenase family. Requires Zn(2+) as cofactor.

The enzyme catalyses L-histidinol + 2 NAD(+) + H2O = L-histidine + 2 NADH + 3 H(+). The protein operates within amino-acid biosynthesis; L-histidine biosynthesis; L-histidine from 5-phospho-alpha-D-ribose 1-diphosphate: step 9/9. Its function is as follows. Catalyzes the sequential NAD-dependent oxidations of L-histidinol to L-histidinaldehyde and then to L-histidine. The chain is Histidinol dehydrogenase from Sulfurimonas denitrificans (strain ATCC 33889 / DSM 1251) (Thiomicrospira denitrificans (strain ATCC 33889 / DSM 1251)).